The following is a 1151-amino-acid chain: Cation channel sperm-associated protein subunit gamma 1 (1151 aa).

Residues 1 to 38 (MVSRPAMSPVSPVWPRKPNLWAFWVLRLVLLLSLKSWA) form the signal peptide. Residues 39–1063 (EDTLQHCTWL…GLPLSSKRSS (1025 aa)) lie on the Extracellular side of the membrane. An N-linked (GlcNAc...) asparagine glycan is attached at Asn356. Residues 1064 to 1084 (FIVMVSTSFFIALVVFYILFC) form a helical membrane-spanning segment. Residues 1085–1151 (LVWPHIVKAW…NVQAKRAKVA (67 aa)) are Cytoplasmic-facing. The span at 1113-1123 (SSSSGGFTLHS) shows a compositional bias: low complexity. Positions 1113-1151 (SSSSGGFTLHSHSSEGSFEGPSRPGTKEDNVQAKRAKVA) are disordered.

This sequence belongs to the CATSPERG family.

It is found in the membrane. The protein is Cation channel sperm-associated protein subunit gamma 1 (Catsperg1) of Mus musculus (Mouse).